The following is a 403-amino-acid chain: Na(+)-translocating NADH-quinone reductase subunit B (403 aa).

9 helical membrane-spanning segments follow: residues M56–G76, A121–F141, L164–G184, G225–G245, G260–T280, I287–S307, M312–F332, W348–F368, and G371–V391. An FMN phosphoryl threonine modification is found at T230.

This sequence belongs to the NqrB/RnfD family. As to quaternary structure, composed of six subunits; NqrA, NqrB, NqrC, NqrD, NqrE and NqrF. The cofactor is FMN.

The protein resides in the cell inner membrane. It carries out the reaction a ubiquinone + n Na(+)(in) + NADH + H(+) = a ubiquinol + n Na(+)(out) + NAD(+). Functionally, NQR complex catalyzes the reduction of ubiquinone-1 to ubiquinol by two successive reactions, coupled with the transport of Na(+) ions from the cytoplasm to the periplasm. NqrA to NqrE are probably involved in the second step, the conversion of ubisemiquinone to ubiquinol. This chain is Na(+)-translocating NADH-quinone reductase subunit B, found in Pseudomonas paraeruginosa (strain DSM 24068 / PA7) (Pseudomonas aeruginosa (strain PA7)).